We begin with the raw amino-acid sequence, 311 residues long: Pyrimidine-specific ribonucleoside hydrolase RihA (311 aa).

His240 is a catalytic residue.

It belongs to the IUNH family. RihA subfamily.

In terms of biological role, hydrolyzes with equal efficiency cytidine or uridine to ribose and cytosine or uracil, respectively. The chain is Pyrimidine-specific ribonucleoside hydrolase RihA from Escherichia coli O127:H6 (strain E2348/69 / EPEC).